A 301-amino-acid chain; its full sequence is NAD kinase (301 aa).

The active-site Proton acceptor is the D73. Residues D73–G74, N151–D152, R179, D181, T192–S197, A216, and Q250 each bind NAD(+).

Belongs to the NAD kinase family. Requires a divalent metal cation as cofactor.

Its subcellular location is the cytoplasm. It carries out the reaction NAD(+) + ATP = ADP + NADP(+) + H(+). Involved in the regulation of the intracellular balance of NAD and NADP, and is a key enzyme in the biosynthesis of NADP. Catalyzes specifically the phosphorylation on 2'-hydroxyl of the adenosine moiety of NAD to yield NADP. The protein is NAD kinase of Methylibium petroleiphilum (strain ATCC BAA-1232 / LMG 22953 / PM1).